The chain runs to 233 residues: Ribonuclease 3 (233 aa).

Residues 5–127 form the RNase III domain; it reads LERLCRKLGY…VIGAVYLDGG (123 aa). Glu40 contributes to the Mg(2+) binding site. The active site involves Asp44. Asp113 and Glu116 together coordinate Mg(2+). Residue Glu116 is part of the active site. A DRBM domain is found at 156-226; that stretch reads DPKTRLQEYL…ATRALALLLA (71 aa).

Belongs to the ribonuclease III family. In terms of assembly, homodimer. Mg(2+) is required as a cofactor.

It is found in the cytoplasm. It carries out the reaction Endonucleolytic cleavage to 5'-phosphomonoester.. Digests double-stranded RNA. Involved in the processing of primary rRNA transcript to yield the immediate precursors to the large and small rRNAs (23S and 16S). Processes some mRNAs, and tRNAs when they are encoded in the rRNA operon. Processes pre-crRNA and tracrRNA of type II CRISPR loci if present in the organism. This is Ribonuclease 3 from Nitrosococcus oceani (strain ATCC 19707 / BCRC 17464 / JCM 30415 / NCIMB 11848 / C-107).